Consider the following 282-residue polypeptide: Acetyl-coenzyme A carboxylase carboxyl transferase subunit beta (282 aa).

The CoA carboxyltransferase N-terminal domain maps to 26–282 (QWVKCPETGE…IIRLLNLLME (257 aa)).

This sequence belongs to the AccD/PCCB family. As to quaternary structure, acetyl-CoA carboxylase is a heterohexamer composed of biotin carboxyl carrier protein (AccB), biotin carboxylase (AccC) and two subunits each of ACCase subunit alpha (AccA) and ACCase subunit beta (AccD).

It is found in the cytoplasm. The enzyme catalyses N(6)-carboxybiotinyl-L-lysyl-[protein] + acetyl-CoA = N(6)-biotinyl-L-lysyl-[protein] + malonyl-CoA. It functions in the pathway lipid metabolism; malonyl-CoA biosynthesis; malonyl-CoA from acetyl-CoA: step 1/1. Functionally, component of the acetyl coenzyme A carboxylase (ACC) complex. Biotin carboxylase (BC) catalyzes the carboxylation of biotin on its carrier protein (BCCP) and then the CO(2) group is transferred by the transcarboxylase to acetyl-CoA to form malonyl-CoA. The sequence is that of Acetyl-coenzyme A carboxylase carboxyl transferase subunit beta from Salinibacter ruber (strain DSM 13855 / M31).